The primary structure comprises 155 residues: Ribosome maturation factor RimP (155 aa).

Belongs to the RimP family.

Its subcellular location is the cytoplasm. In terms of biological role, required for maturation of 30S ribosomal subunits. In Bacteroides thetaiotaomicron (strain ATCC 29148 / DSM 2079 / JCM 5827 / CCUG 10774 / NCTC 10582 / VPI-5482 / E50), this protein is Ribosome maturation factor RimP.